A 638-amino-acid chain; its full sequence is Pentatricopeptide repeat-containing protein At3g49730 (638 aa).

12 PPR repeats span residues 130–164 (SYEV…NPEL), 166–200 (EPEL…GLEP), 201–231 (DEYV…MREK), 235–269 (NLRY…GLEP), 270–304 (DIVV…GFEP), 305–340 (NVNC…GCEA), 341–375 (DIVT…GVMP), 376–410 (SQVT…GCHP), 411–445 (DLLI…GLSP), 446–480 (GVDT…GIFS), 483–513 (QYGT…ISNK), and 520–554 (NVSA…DLMP). The tract at residues 604 to 638 (LIEKAKPKGNKEGKKKGTDHQRYKGRGERSRAKAL) is disordered.

The protein belongs to the PPR family. P subfamily.

The chain is Pentatricopeptide repeat-containing protein At3g49730 from Arabidopsis thaliana (Mouse-ear cress).